Consider the following 150-residue polypeptide: Ribonuclease K6 (150 aa).

Positions 1-23 are cleaved as a signal peptide; sequence MVLCFPLLLLLLVLWGPVCLLHA. His38 (proton acceptor) is an active-site residue. Disulfide bonds link Cys46–Cys104, Cys60–Cys114, Cys78–Cys129, and Cys85–Cys92. The N-linked (GlcNAc...) asparagine glycan is linked to Asn55. Substrate contacts are provided by residues 61–65 and Lys86; that span reads KHQNT. Residue Asn100 is glycosylated (N-linked (GlcNAc...) asparagine). Residue Arg105 participates in substrate binding. His145 serves as the catalytic Proton donor.

This sequence belongs to the pancreatic ribonuclease family. In terms of assembly, interacts (via N-terminus) with bacterial lipopolysaccharide (LPS).

It is found in the secreted. The protein localises to the lysosome. Its subcellular location is the cytoplasmic granule. Ribonuclease which shows a preference for the pyrimidines uridine and cytosine. Has potent antibacterial activity against a range of Gram-positive and Gram-negative bacteria, including P.aeruginosa, A.baumanii, M.luteus, S.aureus, E.faecalis, E.faecium, S.saprophyticus and E.coli. Causes loss of bacterial membrane integrity, and also promotes agglutination of Gram-negative bacteria. Probably contributes to urinary tract sterility. Bactericidal activity is independent of RNase activity. The chain is Ribonuclease K6 (RNASE6) from Papio hamadryas (Hamadryas baboon).